Consider the following 51-residue polypeptide: Large ribosomal subunit protein eL39 (51 aa).

This sequence belongs to the eukaryotic ribosomal protein eL39 family. In terms of assembly, interacts with IMPACT.

The chain is Large ribosomal subunit protein eL39 (RPL39) from Gallus gallus (Chicken).